The following is a 247-amino-acid chain: L-cystine import ATP-binding protein TcyC (247 aa).

The region spanning 2–240 is the ABC transporter domain; the sequence is LTVKGLNKSF…PKEERTQRFL (239 aa). 34-41 lines the ATP pocket; that stretch reads GPSGSGKT.

The protein belongs to the ABC transporter superfamily. L-cystine importer (TC 3.A.1.3.14) family. The complex is composed of two ATP-binding proteins (TcyC), two transmembrane proteins (TcyB) and a solute-binding protein (TcyA).

The protein resides in the cell membrane. In terms of biological role, part of the ABC transporter complex TcyABC involved in L-cystine import. Responsible for energy coupling to the transport system. In Bacillus subtilis (strain 168), this protein is L-cystine import ATP-binding protein TcyC (tcyC).